We begin with the raw amino-acid sequence, 208 residues long: Adenylate kinase (208 aa).

10 to 15 (GAGKGT) is an ATP binding site. The tract at residues 30 to 59 (STGEMLRAAVAAGTPVGLKAKDVMASGGLV) is NMP. AMP contacts are provided by residues Thr-31, Arg-36, 57 to 59 (GLV), 85 to 88 (GFPR), and Gln-92. The interval 126-142 (SRVAEMTARGEQVRADD) is LID. ATP is bound at residue Arg-127. AMP contacts are provided by Arg-139 and Arg-150. Residue Met-178 coordinates ATP.

Belongs to the adenylate kinase family. In terms of assembly, monomer.

It localises to the cytoplasm. The catalysed reaction is AMP + ATP = 2 ADP. It participates in purine metabolism; AMP biosynthesis via salvage pathway; AMP from ADP: step 1/1. Its function is as follows. Catalyzes the reversible transfer of the terminal phosphate group between ATP and AMP. Plays an important role in cellular energy homeostasis and in adenine nucleotide metabolism. The protein is Adenylate kinase of Nitrobacter hamburgensis (strain DSM 10229 / NCIMB 13809 / X14).